The sequence spans 770 residues: Cyclopiane-type diterpene synthase (770 aa).

A terpene cyclase region spans residues 5–335 (ITDEYAVGID…VPRYCKVDRN (331 aa)). 2 residues coordinate Mg(2+): Asp-97 and Asp-101. Residues Asp-97, Asp-101, 190-193 (RIVD), Asn-234, 238-242 (SWDKE), and 328-329 (RY) each bind substrate. Positions 97–101 (DDETD) match the DDXXD 1 motif. The short motif at 234–242 (NDLFSWDKE) is the NSE/DTE element. The prenyltransferase stretch occupies residues 336-720 (PYKDHLEKYG…WALRLLIMKL (385 aa)). The segment at 371–397 (NQLKEPSSSTYKTHFSPLEPNPGPEQT) is disordered. A compositionally biased stretch (polar residues) spans 374–383 (KEPSSSTYKT). Isopentenyl diphosphate is bound by residues Lys-423, Arg-426, and His-455. Residues Asp-462 and Asp-466 each contribute to the Mg(2+) site. Positions 462–466 (DDIQD) match the DDXXD 2 motif. Arg-471 is a dimethylallyl diphosphate binding site. Arg-472 lines the isopentenyl diphosphate pocket. Dimethylallyl diphosphate-binding residues include Lys-548, Thr-549, Gln-584, Asn-591, Lys-620, and Lys-630.

It in the N-terminal section; belongs to the terpene synthase family. This sequence in the C-terminal section; belongs to the FPP/GGPP synthase family. Hexamer. Requires Mg(2+) as cofactor.

The catalysed reaction is isopentenyl diphosphate + (2E,6E)-farnesyl diphosphate = (2E,6E,10E)-geranylgeranyl diphosphate + diphosphate. The enzyme catalyses (2E,6E,10E)-geranylgeranyl diphosphate + H2O = (+)-penichrysol + diphosphate. The protein operates within secondary metabolite biosynthesis; terpenoid biosynthesis. Bifunctional terpene synthase converts dimethylallyl diphosphate (DMAPP) and isopentenyl diphosphate (IPP) into a cyclopiane-type diterpene. The C-terminal prenyltransferase (PT) domain of PcCS catalyzes formation of geranylgeranyl pyrophosphate (GGPP), whereas the N-terminal terpene cyclase (TC) domain catalyzes the cyclization of GGPP to the cyclopiane-type diterpene penichrysol. In Penicillium chrysogenum (Penicillium notatum), this protein is Cyclopiane-type diterpene synthase.